The sequence spans 459 residues: AGFKAGVKDYKLTYYTPDYKTKDTDILAAFRMTPQPGVPPEEAGRAVAAESSTGTWTTVWTDGLTSLDRYKGRCYHIEPVAGEENQYIAYVAYPLDLFEEGSVTNMFTSIVGNVFGFKALRALRLEDLRIPPAYVKTFQGPPHGIQVERDKLNKYGRPLLGCTIKPKLGLSAKNYGRAVYECLRGGLDFTKDDENVNSQPFMRWRDRFLFCAEAIYKAQAETGEIKGHYLNATAGTCEEMNKRAVFARELGVPIVMHDYLTGGFTANTSLAHYCRDNGLLLHIHRAMHAVIDRQKNHGIHFRVLAKALRMSGGDHIHSGTVVGKLEGEREITLGFVDLLRDDFIEKDRTRGIYFTQDWVSLPGVLPVASGGIHVWHMPALTEIFGDDSVLQFGGGTLXXPWGNAPGAVANRVALEACVQARNEGRDLAREGNEIIREASKWSPELAAACEVWKEIKFEF.

Lys4 carries the post-translational modification N6,N6,N6-trimethyllysine. Positions 113 and 163 each coordinate substrate. Lys165 serves as the catalytic Proton acceptor. Position 167 (Lys167) interacts with substrate. Mg(2+) contacts are provided by Lys191, Asp193, and Glu194. Residue Lys191 is modified to N6-carboxylysine. Catalysis depends on His284, which acts as the Proton acceptor. Substrate-binding residues include Arg285, His317, and Ser369.

It belongs to the RuBisCO large chain family. Type I subfamily. In terms of assembly, heterohexadecamer of 8 large chains and 8 small chains; disulfide-linked. The disulfide link is formed within the large subunit homodimers. Mg(2+) is required as a cofactor. Post-translationally, the disulfide bond which can form in the large chain dimeric partners within the hexadecamer appears to be associated with oxidative stress and protein turnover.

The protein resides in the plastid. Its subcellular location is the chloroplast. The enzyme catalyses 2 (2R)-3-phosphoglycerate + 2 H(+) = D-ribulose 1,5-bisphosphate + CO2 + H2O. It catalyses the reaction D-ribulose 1,5-bisphosphate + O2 = 2-phosphoglycolate + (2R)-3-phosphoglycerate + 2 H(+). RuBisCO catalyzes two reactions: the carboxylation of D-ribulose 1,5-bisphosphate, the primary event in carbon dioxide fixation, as well as the oxidative fragmentation of the pentose substrate in the photorespiration process. Both reactions occur simultaneously and in competition at the same active site. In Cephalotus follicularis (Albany pitcher plant), this protein is Ribulose bisphosphate carboxylase large chain.